The following is a 1127-amino-acid chain: E3 ubiquitin-protein ligase TRIM33 (1127 aa).

Over residues 1 to 18 the composition is skewed to gly residues; it reads MAENKGGGEAESGGGGSG. A disordered region spans residues 1 to 118; the sequence is MAENKGGGEA…PSAGPPPGPP (118 aa). A necessary for E3 ubiquitin-protein ligase activity and repression of SMAD4 signaling and transcriptional repression region spans residues 1 to 147; the sequence is MAENKGGGEA…AEPKLLPCLH (147 aa). Residues 19–37 show a composition bias toward low complexity; the sequence is SAPVTAGAAGPAAQEAEPP. The span at 52-64 shows a compositional bias: gly residues; sequence RAGAEGGAAGPDD. Residues 65-97 show a composition bias toward low complexity; the sequence is GGVAAASSGSAQAASSPAASVGTGVAGGAVSTP. Residues 98–118 show a composition bias toward pro residues; it reads APAPASAPAPGPSAGPPPGPP. The RING-type zinc-finger motif lies at 125–154; sequence CAVCQQSLQSRREAEPKLLPCLHSFCLRCL. B box-type zinc fingers lie at residues 212 to 259 and 271 to 312; these read KSEQ…IRKK and QRPV…YQFL. Residues Cys217, Cys220, Cys241, His245, Cys276, His279, Cys299, and His304 each coordinate Zn(2+). The tract at residues 299-401 is necessary for oligomerization; that stretch reads CQLLEHKEHR…QMKLLQQQND (103 aa). Residues 299–401 adopt a coiled-coil conformation; it reads CQLLEHKEHR…QMKLLQQQND (103 aa). Residues Lys329, Lys334, Lys481, and Lys504 each participate in a glycyl lysine isopeptide (Lys-Gly) (interchain with G-Cter in SUMO2) cross-link. Arg515 is modified (asymmetric dimethylarginine; alternate). Arg515 carries the omega-N-methylarginine; alternate modification. Lys527 is covalently cross-linked (Glycyl lysine isopeptide (Lys-Gly) (interchain with G-Cter in SUMO2)). Arg535 bears the Omega-N-methylarginine mark. A disordered region spans residues 536-563; sequence MQQPPAPVPTTTTTTQQHPRQAAPQMLQ. Residue Arg577 is modified to Asymmetric dimethylarginine. At Arg591 the chain carries Asymmetric dimethylarginine; alternate. Arg591 is modified (omega-N-methylarginine; alternate). Asymmetric dimethylarginine occurs at positions 598 and 604. Disordered stretches follow at residues 608-629, 673-692, and 703-818; these read PQYS…HAGP, NPEN…EDAG, and YISG…TPPL. The span at 723 to 759 shows a compositional bias: low complexity; the sequence is PSALSPGSSGLSNSHTPVRPPSTSSTGSRGSCGSSGR. Lys763 and Lys769 each carry N6-acetyllysine; alternate. Residues Lys763 and Lys769 each participate in a glycyl lysine isopeptide (Lys-Gly) (interchain with G-Cter in SUMO2); alternate cross-link. Residue Lys774 forms a Glycyl lysine isopeptide (Lys-Gly) (interchain with G-Cter in SUMO2) linkage. Residues Lys776 and Lys793 each participate in a glycyl lysine isopeptide (Lys-Gly) (interchain with G-Cter in SUMO2); alternate cross-link. Glycyl lysine isopeptide (Lys-Gly) (interchain with G-Cter in SUMO1); alternate cross-links involve residues Lys776 and Lys793. Lys793 bears the N6-acetyllysine; alternate mark. Positions 793-802 are enriched in basic and acidic residues; that stretch reads KQEKTEDGRR. Residue Lys796 forms a Glycyl lysine isopeptide (Lys-Gly) (interchain with G-Cter in SUMO2) linkage. Ser803 carries the phosphoserine modification. Positions 807–818 are enriched in low complexity; the sequence is LSSPESSLTPPL. The residue at position 815 (Thr815) is a Phosphothreonine. A Glycyl lysine isopeptide (Lys-Gly) (interchain with G-Cter in SUMO2) cross-link involves residue Lys861. At Ser862 the chain carries Phosphoserine. The PHD-type zinc-finger motif lies at 887 to 934; that stretch reads EDWCAVCQNGGDLLCCEKCPKVFHLTCHVPTLLSFPSGDWICTFCRDI. Lys951 is modified (N6-acetyllysine). Lys953 is modified (N6-acetyllysine; alternate). Lys953 participates in a covalent cross-link: Glycyl lysine isopeptide (Lys-Gly) (interchain with G-Cter in SUMO2); alternate. Residues 957–1080 enclose the Bromo domain; it reads GLSPVDQRKC…LYFEDKLTEI (124 aa). Residues Lys1007 and Lys1043 each participate in a glycyl lysine isopeptide (Lys-Gly) (interchain with G-Cter in SUMO2) cross-link. Thr1051 is subject to Phosphothreonine. Lys1057 participates in a covalent cross-link: Glycyl lysine isopeptide (Lys-Gly) (interchain with G-Cter in SUMO2). The tract at residues 1088 to 1127 is disordered; sequence PLPEFEQEEDDGEVTEDSDEDFIQPRRKRLKSDERPVHIK. Positions 1092–1109 are enriched in acidic residues; sequence FEQEEDDGEVTEDSDEDF. Residue Thr1102 is modified to Phosphothreonine. Residue Ser1105 is modified to Phosphoserine. Lys1118 participates in a covalent cross-link: Glycyl lysine isopeptide (Lys-Gly) (interchain with G-Cter in SUMO2). A compositionally biased stretch (basic and acidic residues) spans 1118–1127; that stretch reads KSDERPVHIK. A Phosphoserine modification is found at Ser1119.

It belongs to the TRIM/RBCC family. Homooligomer and heterooligomer with TRIM24 and TRIM28 family members. Interacts with SMAD4 in unstimulated cells. Found in a complex with SMAD2 and SMAD3 upon addition of TGF-beta. Interacts with SMAD2 and SMAD3. Interacts with SMAD4 under basal and induced conditions and, upon TGF-beta signaling, with activated SMAD2. Forms a ternary complex with SMAD4 and SMAD2 upon TGF-beta signaling. In terms of processing, sumoylated with SUMO1. In terms of tissue distribution, expressed in stem cells at the bottom of the crypts of the colon (at protein level). Expressed in colon adenomas and adenocarcinomas (at protein level). Expressed in brain, lung, liver, spleen, thymus, prostate, kidney, testis, heart, placenta, pancreas, small intestine, ovary, colon, skeletal muscle and hematopoietic progenitors.

The protein localises to the nucleus. The catalysed reaction is S-ubiquitinyl-[E2 ubiquitin-conjugating enzyme]-L-cysteine + [acceptor protein]-L-lysine = [E2 ubiquitin-conjugating enzyme]-L-cysteine + N(6)-ubiquitinyl-[acceptor protein]-L-lysine.. It participates in protein modification; protein ubiquitination. Acts as an E3 ubiquitin-protein ligase. Promotes SMAD4 ubiquitination, nuclear exclusion and degradation via the ubiquitin proteasome pathway. According to PubMed:16751102, does not promote a decrease in the level of endogenous SMAD4. May act as a transcriptional repressor. Inhibits the transcriptional response to TGF-beta/BMP signaling cascade. Plays a role in the control of cell proliferation. Its association with SMAD2 and SMAD3 stimulates erythroid differentiation of hematopoietic stem/progenitor. Monoubiquitinates SMAD4 and acts as an inhibitor of SMAD4-dependent TGF-beta/BMP signaling cascade (Monoubiquitination of SMAD4 hampers its ability to form a stable complex with activated SMAD2/3 resulting in inhibition of TGF-beta/BMP signaling cascade). The sequence is that of E3 ubiquitin-protein ligase TRIM33 (TRIM33) from Homo sapiens (Human).